Consider the following 274-residue polypeptide: 2,3,4,5-tetrahydropyridine-2,6-dicarboxylate N-succinyltransferase (274 aa).

The substrate site is built by Arg-104 and Asp-141.

It belongs to the transferase hexapeptide repeat family. As to quaternary structure, homotrimer.

It is found in the cytoplasm. It carries out the reaction (S)-2,3,4,5-tetrahydrodipicolinate + succinyl-CoA + H2O = (S)-2-succinylamino-6-oxoheptanedioate + CoA. It functions in the pathway amino-acid biosynthesis; L-lysine biosynthesis via DAP pathway; LL-2,6-diaminopimelate from (S)-tetrahydrodipicolinate (succinylase route): step 1/3. In Shewanella sediminis (strain HAW-EB3), this protein is 2,3,4,5-tetrahydropyridine-2,6-dicarboxylate N-succinyltransferase.